The following is a 528-amino-acid chain: tRNA-2-methylthio-N(6)-dimethylallyladenosine synthase (528 aa).

Positions 19–134 (RTYEVRTYGC…LPTLLERARH (116 aa)) constitute an MTTase N-terminal domain. [4Fe-4S] cluster-binding residues include C28, C63, C97, C171, C175, and C178. One can recognise a Radical SAM core domain in the interval 157-387 (RDEIASGWVS…TALQERISHE (231 aa)). The region spanning 390 to 460 (QRVVGRTVEV…PFHLIADSVD (71 aa)) is the TRAM domain.

The protein belongs to the methylthiotransferase family. MiaB subfamily. Monomer. It depends on [4Fe-4S] cluster as a cofactor.

It localises to the cytoplasm. It carries out the reaction N(6)-dimethylallyladenosine(37) in tRNA + (sulfur carrier)-SH + AH2 + 2 S-adenosyl-L-methionine = 2-methylsulfanyl-N(6)-dimethylallyladenosine(37) in tRNA + (sulfur carrier)-H + 5'-deoxyadenosine + L-methionine + A + S-adenosyl-L-homocysteine + 2 H(+). Its function is as follows. Catalyzes the methylthiolation of N6-(dimethylallyl)adenosine (i(6)A), leading to the formation of 2-methylthio-N6-(dimethylallyl)adenosine (ms(2)i(6)A) at position 37 in tRNAs that read codons beginning with uridine. The sequence is that of tRNA-2-methylthio-N(6)-dimethylallyladenosine synthase from Clavibacter michiganensis subsp. michiganensis (strain NCPPB 382).